Here is a 377-residue protein sequence, read N- to C-terminus: Succinyl-diaminopimelate desuccinylase (377 aa).

H67 is a binding site for Zn(2+). D69 is an active-site residue. D100 serves as a coordination point for Zn(2+). The Proton acceptor role is filled by E134. The Zn(2+) site is built by E135, E163, and H349.

It belongs to the peptidase M20A family. DapE subfamily. Homodimer. Zn(2+) is required as a cofactor. Requires Co(2+) as cofactor.

The enzyme catalyses N-succinyl-(2S,6S)-2,6-diaminopimelate + H2O = (2S,6S)-2,6-diaminopimelate + succinate. The protein operates within amino-acid biosynthesis; L-lysine biosynthesis via DAP pathway; LL-2,6-diaminopimelate from (S)-tetrahydrodipicolinate (succinylase route): step 3/3. Catalyzes the hydrolysis of N-succinyl-L,L-diaminopimelic acid (SDAP), forming succinate and LL-2,6-diaminopimelate (DAP), an intermediate involved in the bacterial biosynthesis of lysine and meso-diaminopimelic acid, an essential component of bacterial cell walls. The chain is Succinyl-diaminopimelate desuccinylase from Glaesserella parasuis serovar 5 (strain SH0165) (Haemophilus parasuis).